A 435-amino-acid polypeptide reads, in one-letter code: Glutamate-1-semialdehyde 2,1-aminomutase (435 aa).

K266 carries the post-translational modification N6-(pyridoxal phosphate)lysine.

Belongs to the class-III pyridoxal-phosphate-dependent aminotransferase family. HemL subfamily. In terms of assembly, homodimer. The cofactor is pyridoxal 5'-phosphate.

The protein resides in the cytoplasm. It carries out the reaction (S)-4-amino-5-oxopentanoate = 5-aminolevulinate. It participates in porphyrin-containing compound metabolism; protoporphyrin-IX biosynthesis; 5-aminolevulinate from L-glutamyl-tRNA(Glu): step 2/2. The chain is Glutamate-1-semialdehyde 2,1-aminomutase from Coxiella burnetii (strain RSA 331 / Henzerling II).